A 650-amino-acid polypeptide reads, in one-letter code: Glycoprotein antigen BM86 (650 aa).

An N-terminal signal peptide occupies residues 1 to 19; that stretch reads MRGIALFVAAVSLIVEGTA. EGF-like domains follow at residues 20-66 and 67-104; these read ESSI…KQCE and YKDT…LQCK. 6 disulfides stabilise this stretch: C24–C37, C32–C49, C51–C65, C71–C81, C76–C91, and C93–C103. N141 and N182 each carry an N-linked (GlcNAc...) asparagine glycan. EGF-like domains are found at residues 205–247, 251–292, and 291–335; these read CINA…ITCK, HTVS…DTCI, and CISD…NECL. Cystine bridges form between C209–C222, C218–C231, C233–C246, C255–C269, C263–C278, C280–C291, C295–C307, C300–C316, and C318–C334. N-linked (GlcNAc...) asparagine glycans are attached at residues N348 and N382. EGF-like domains lie at 482 to 530 and 531 to 568; these read RRSV…IGCI and ERTT…HECY. Disulfide bonds link C486-C500, C492-C516, C518-C529, C535-C550, C543-C559, and C561-C567. Residues 603–628 form a disordered region; sequence KSEATTAATTTTKAKDKDPDPGKSSA. S627 carries GPI-anchor amidated serine lipidation. Positions 628-650 are cleaved as a propeptide — removed in mature form; the sequence is AAAVSATGLLLLLAATSVTAASL.

The protein localises to the cell membrane. In Rhipicephalus microplus (Cattle tick), this protein is Glycoprotein antigen BM86.